The primary structure comprises 142 residues: Large ribosomal subunit protein uL13 (142 aa).

The protein belongs to the universal ribosomal protein uL13 family. In terms of assembly, part of the 50S ribosomal subunit.

Functionally, this protein is one of the early assembly proteins of the 50S ribosomal subunit, although it is not seen to bind rRNA by itself. It is important during the early stages of 50S assembly. This is Large ribosomal subunit protein uL13 from Helicobacter hepaticus (strain ATCC 51449 / 3B1).